A 164-amino-acid chain; its full sequence is uncharacterized protein (164 aa).

CBS domains lie at 9 to 66 (ATTK…DIDS) and 72 to 128 (MTKD…VHTM).

This is an uncharacterized protein from Acidianus ambivalens (Desulfurolobus ambivalens).